The chain runs to 276 residues: Halorhodopsin (276 aa).

The propeptide occupies 1–21 (MTAVSTTATTVLQATQSDVLQ). Topologically, residues 22–25 (EIQS) are extracellular. The chain crosses the membrane as a helical span at residues 26-51 (NFLLNSSIWVNIALAGVVILLFVAMG). Residues 52–57 (RDLESP) lie on the Cytoplasmic side of the membrane. Residues 58–81 (RAKLIWVATMLVPLVSISSYAGLA) form a helical membrane-spanning segment. Topologically, residues 82–105 (SGLTVGFLQMPPGHALAGQEVLSP) are extracellular. A helical transmembrane segment spans residues 106–127 (WGRYLTWTFSTPMILLALGLLA). At 128 to 130 (DTD) the chain is on the cytoplasmic side. A helical transmembrane segment spans residues 131–154 (IASLFTAITMDIGMCVTGLAAALI). The Extracellular segment spans residues 155 to 157 (TSS). The helical transmembrane segment at 158–180 (HLLRWVFYGISCAFFVAVLYVLL) threads the bilayer. Residues 181 to 192 (VQWPADAEAAGT) lie on the Cytoplasmic side of the membrane. The chain crosses the membrane as a helical span at residues 193-216 (SEIFGTLKILTVVLWLGYPILWAL). Residues 217–225 (GSEGVALLS) lie on the Extracellular side of the membrane. The helical transmembrane segment at 226-254 (VGVTSWGYSGLDILAKYVFAFLLLRWVAA) threads the bilayer. Lys241 bears the N6-(retinylidene)lysine mark. At 255-276 (NEGTVSGSGMGIGSGGAAPADD) the chain is on the cytoplasmic side.

It belongs to the archaeal/bacterial/fungal opsin family.

It is found in the cell membrane. In terms of biological role, light-driven anion pump. This chain is Halorhodopsin, found in Halobacterium halobium (strain shark).